The chain runs to 401 residues: Voltage-gated potassium channel subunit beta-1 (401 aa).

NADP(+) is bound by residues T90, W91, Q97, and D119. The active-site Proton donor/acceptor is Y124. Residues N192, S222, R223, Q248, W277, S278, P279, L280, A281, C282, K288, R298, G357, S359, Q363, E366, and N367 each coordinate NADP(+).

The protein belongs to the shaker potassium channel beta subunit family. In terms of assembly, homotetramer. Interaction with tetrameric potassium channel alpha subunits gives rise to a heterooctamer. Identified in potassium channel complexes containing KCNA1, KCNA2, KCNA4, KCNA5, KCNA6, KCNAB1 and KCNAB2. Part of a complex containing KCNA1, KCNA4 and LGI1; interaction with LGI1 inhibits down-regulation of KCNA1 channel activity. Interacts with the dimer formed by GNB1 and GNG2; this enhances KCNA1 binding. Interacts with SQSTM. As to expression, detected in brain, in hippocampus and striatum (at protein level). Predominantly expressed in brain. No expression found in heart, skeletal muscle or kidney. In the late embryonic and early neonatal brain, highly expressed in hippocampus, cerebral cortex, caudate putamen, colliculus and cerebellum.

The protein localises to the cytoplasm. It localises to the membrane. The protein resides in the cell membrane. The enzyme catalyses a primary alcohol + NADP(+) = an aldehyde + NADPH + H(+). It carries out the reaction a secondary alcohol + NADP(+) = a ketone + NADPH + H(+). Regulatory subunit of the voltage-gated potassium (Kv) Shaker channels composed of pore-forming and potassium-conducting alpha subunits and of regulatory beta subunits. The beta-1/KCNAB1 cytoplasmic subunit mediates closure of delayed rectifier potassium channels by physically obstructing the pore via its N-terminal domain and increases the speed of channel closure for other family members. Promotes the inactivation of KCNA1, KCNA2, KCNA4, KCNA5 and KCNA6 alpha subunit-containing channels. Displays nicotinamide adenine dinucleotide phosphate (NADPH)-dependent aldoketoreductase activity by catalyzing the NADPH-dependent reduction of a variety of endogenous aldehydes and ketones. The binding of NADPH is required for efficient down-regulation of potassium channel activity. Oxidation of the bound NADPH restrains N-terminal domain from blocking the channel, thereby decreasing N-type inactivation of potassium channel activity. The sequence is that of Voltage-gated potassium channel subunit beta-1 from Mus musculus (Mouse).